Reading from the N-terminus, the 24-residue chain is Cytochrome c oxidase subunit 7A2, mitochondrial (24 aa).

The segment covering 1 to 13 (FENKVPEKQKLFQ) has biased composition (basic and acidic residues). Positions 1-24 (FENKVPEKQKLFQEDNGIPVHLKG) are disordered. K10 is subject to N6-acetyllysine.

Belongs to the cytochrome c oxidase VIIa family. Component of the cytochrome c oxidase (complex IV, CIV), a multisubunit enzyme composed of 14 subunits. The complex is composed of a catalytic core of 3 subunits MT-CO1, MT-CO2 and MT-CO3, encoded in the mitochondrial DNA, and 11 supernumerary subunits COX4I, COX5A, COX5B, COX6A, COX6B, COX6C, COX7A, COX7B, COX7C, COX8 and NDUFA4, which are encoded in the nuclear genome. The complex exists as a monomer or a dimer and forms supercomplexes (SCs) in the inner mitochondrial membrane with NADH-ubiquinone oxidoreductase (complex I, CI) and ubiquinol-cytochrome c oxidoreductase (cytochrome b-c1 complex, complex III, CIII), resulting in different assemblies (supercomplex SCI(1)III(2)IV(1) and megacomplex MCI(2)III(2)IV(2)). Interacts with PET100.

The protein resides in the mitochondrion inner membrane. It functions in the pathway energy metabolism; oxidative phosphorylation. In terms of biological role, component of the cytochrome c oxidase, the last enzyme in the mitochondrial electron transport chain which drives oxidative phosphorylation. The respiratory chain contains 3 multisubunit complexes succinate dehydrogenase (complex II, CII), ubiquinol-cytochrome c oxidoreductase (cytochrome b-c1 complex, complex III, CIII) and cytochrome c oxidase (complex IV, CIV), that cooperate to transfer electrons derived from NADH and succinate to molecular oxygen, creating an electrochemical gradient over the inner membrane that drives transmembrane transport and the ATP synthase. Cytochrome c oxidase is the component of the respiratory chain that catalyzes the reduction of oxygen to water. Electrons originating from reduced cytochrome c in the intermembrane space (IMS) are transferred via the dinuclear copper A center (CU(A)) of subunit 2 and heme A of subunit 1 to the active site in subunit 1, a binuclear center (BNC) formed by heme A3 and copper B (CU(B)). The BNC reduces molecular oxygen to 2 water molecules using 4 electrons from cytochrome c in the IMS and 4 protons from the mitochondrial matrix. This is Cytochrome c oxidase subunit 7A2, mitochondrial (COX7A2) from Ovis aries (Sheep).